Reading from the N-terminus, the 128-residue chain is Azurin (128 aa).

A Plastocyanin-like domain is found at 1 to 128; that stretch reads AECSVDIQGN…AMMKGTLTLK (128 aa). Residues histidine 46, cysteine 112, histidine 117, and methionine 121 each contribute to the Cu cation site.

The protein resides in the periplasm. In terms of biological role, transfers electrons from cytochrome c551 to cytochrome oxidase. This is Azurin from Pseudomonas denitrificans.